We begin with the raw amino-acid sequence, 528 residues long: GMP synthase [glutamine-hydrolyzing] (528 aa).

Positions 13–204 (SIVILDFGSQ…VHNICRSKPD (192 aa)) constitute a Glutamine amidotransferase type-1 domain. C90 functions as the Nucleophile in the catalytic mechanism. Residues H178 and E180 contribute to the active site. A GMPS ATP-PPase domain is found at 205–403 (WTTNTFIDEA…LGLPEEIVNR (199 aa)). Position 232 to 238 (232 to 238 (SGGVDSS)) interacts with ATP.

As to quaternary structure, homodimer.

The enzyme catalyses XMP + L-glutamine + ATP + H2O = GMP + L-glutamate + AMP + diphosphate + 2 H(+). It participates in purine metabolism; GMP biosynthesis; GMP from XMP (L-Gln route): step 1/1. In terms of biological role, catalyzes the synthesis of GMP from XMP. The chain is GMP synthase [glutamine-hydrolyzing] from Prochlorococcus marinus (strain SARG / CCMP1375 / SS120).